Here is a 969-residue protein sequence, read N- to C-terminus: Lateral signaling target protein 2 homolog (969 aa).

A Glycyl lysine isopeptide (Lys-Gly) (interchain with G-Cter in ubiquitin) cross-link involves residue Lys87. 4 disordered regions span residues 290–323 (QDGE…GVEE), 336–360 (SVWK…EEPI), 390–437 (STLL…YHDD), and 715–777 (RSEC…DMSE). Polar residues predominate over residues 295–310 (PTSSTNDPSASTGPDS). Positions 336–346 (SVWKEEEEKQV) are enriched in basic and acidic residues. Positions 391-402 (TLLSPPSQNQSP) are enriched in polar residues. Low complexity predominate over residues 411 to 423 (GSSLEGSSATSST). Residues 715-729 (RSECFGKQSKDDNRK) show a composition bias toward basic and acidic residues. Composition is skewed to low complexity over residues 732–745 (SSSQ…VPSS) and 756–769 (SLSS…VSSL). The FYVE-type zinc-finger motif lies at 899-959 (DEACNSCIAC…VCTHCYMFHV (61 aa)). Cys905, Cys908, Cys921, Cys924, Cys929, Cys932, Cys951, and Cys954 together coordinate Zn(2+).

This sequence belongs to the lst-2 family. In terms of processing, monoubiquitination at Lys-87 prevents binding to phosphatidylinositol 3-phosphate (PI3P) and localization to early endosome membranes.

It localises to the cytoplasm. Its subcellular location is the cytosol. The protein localises to the early endosome membrane. Negative regulator of epidermal growth factor receptor (EGFR) signaling. Acts by promoting EGFR degradation in endosomes when not monoubiquitinated. The polypeptide is Lateral signaling target protein 2 homolog (zfyve28) (Danio rerio (Zebrafish)).